The sequence spans 141 residues: Ribosome-binding factor A (141 aa).

Belongs to the RbfA family. As to quaternary structure, monomer. Binds 30S ribosomal subunits, but not 50S ribosomal subunits or 70S ribosomes.

It is found in the cytoplasm. One of several proteins that assist in the late maturation steps of the functional core of the 30S ribosomal subunit. Associates with free 30S ribosomal subunits (but not with 30S subunits that are part of 70S ribosomes or polysomes). Required for efficient processing of 16S rRNA. May interact with the 5'-terminal helix region of 16S rRNA. This is Ribosome-binding factor A from Beijerinckia indica subsp. indica (strain ATCC 9039 / DSM 1715 / NCIMB 8712).